Reading from the N-terminus, the 256-residue chain is Acidic leucine-rich nuclear phosphoprotein 32 family member E (256 aa).

LRR repeat units follow at residues 43 to 64, 65 to 87, and 89 to 110; these read ELEF…PTLS, KLRK…AERC, and NLTY…EALQ. Positions 123–161 constitute an LRRCT domain; sequence CEITNLEDYRDSIFDLLQQITYLDGFDQEDNEAPDSEDD. Positions 147-256 are disordered; the sequence is GFDQEDNEAP…PEDEGEEEDD (110 aa). Acidic residues-rich tracts occupy residues 148-205 and 215-235; these read FDQE…EEEV and IQDE…EEEA. Residues 204 to 256 are ZID domain; it reads EVGLSYLMKEEIQDEDDDDDYVEEGGDEEEEAEGIRGEKRKRDPEDEGEEEDD. The span at 236 to 247 shows a compositional bias: basic and acidic residues; it reads EGIRGEKRKRDP.

It belongs to the ANP32 family. In terms of assembly, component of a SWR1-like complex. Interacts with H2A.Z/H2AZ1.

Its subcellular location is the cytoplasm. It is found in the nucleus. In terms of biological role, histone chaperone that specifically mediates the genome-wide removal of histone H2A.Z/H2AZ1 from the nucleosome: removes H2A.Z/H2AZ1 from its normal sites of deposition, especially from enhancer and insulator regions. Not involved in deposition of H2A.Z/H2AZ1 in the nucleosome. May stabilize the evicted H2A.Z/H2AZ1-H2B dimer, thus shifting the equilibrium towards dissociation and the off-chromatin state. Inhibits activity of protein phosphatase 2A (PP2A). Does not inhibit protein phosphatase 1. May play a role in cerebellar development and synaptogenesis. This is Acidic leucine-rich nuclear phosphoprotein 32 family member E (ANP32E) from Gallus gallus (Chicken).